A 58-amino-acid polypeptide reads, in one-letter code: Large ribosomal subunit protein eL20 (58 aa).

The interval T37 to A58 is disordered. Over residues P48–A58 the composition is skewed to basic and acidic residues.

This sequence belongs to the eukaryotic ribosomal protein eL20 family. As to quaternary structure, part of the 50S ribosomal subunit. Binds 23S rRNA.

This chain is Large ribosomal subunit protein eL20, found in Halorubrum lacusprofundi (strain ATCC 49239 / DSM 5036 / JCM 8891 / ACAM 34).